A 218-amino-acid polypeptide reads, in one-letter code: Tubulin polymerization-promoting protein (218 aa).

Positions 1–46 (MADSKAKPAKAANKTPPKSPGDPARAAKRLSLESEGANEGATAAPE) are disordered. The interval 1-115 (MADSKAKPAK…SCRTITFEQF (115 aa)) is mediates interaction with LIMK1. Threonine 15 bears the Phosphothreonine mark. Residues serine 19, serine 31, and serine 34 each carry the phosphoserine modification. Threonine 42 carries the phosphothreonine modification. Zn(2+) contacts are provided by histidine 60, histidine 71, cysteine 79, and cysteine 82. A Phosphothreonine modification is found at threonine 91. Serine 106 carries the post-translational modification Phosphoserine. Serine 151 carries an O-linked (GlcNAc) serine glycan. Residues serine 158 and serine 159 each carry the phosphoserine modification. The disordered stretch occupies residues 166–192 (TDTSKFTGSHKERFDQSGKGKGKAGRV). Over residues 174 to 183 (SHKERFDQSG) the composition is skewed to basic and acidic residues.

The protein belongs to the TPPP family. In terms of assembly, homodimer. Binds tubulin; binding is inhibited by GTP. Interacts with MAPK1. Interacts with GAPDH; the interaction is direct. Interacts with LIMK1 (via the PDZ domain); the interaction is direct. Interacts with LIMK2. Interacts with HDAC6; thereby inhibiting the tubulin deacetylase activity of HDAC6. Interacts with aggregated SNCA; may have a pro-aggregatory role in synucleinopathies. Interacts with DYNLL1. Interacts (via C-terminus) with S100A2, S100A6 and S100B; these interactions inhibit TPPP dimerization. Mg(2+) serves as cofactor. Phosphorylated by LIMK1 on serine residues; phosphorylation may alter the tubulin polymerization activity. Phosphorylation by LIMK2, but not LIMK1, regulates astral microtubule organization at early stage of mitosis. Phosphorylation by ROCK1 at Ser-31, Ser-106 and Ser-158 inhibits interaction with HDAC6, resulting in decreased acetylation of tubulin, increased cell motility and entry into S-phase. Phosphorylation by CDK1 inhibits the microtubule polymerizing activity. In terms of processing, degraded by the proteasome; zinc-binding inhibits degradation by the proteasome. As to expression, widely expressed with higher expression in brain (at protein level).

Its subcellular location is the golgi outpost. It is found in the cytoplasm. The protein resides in the cytoskeleton. It localises to the microtubule organizing center. The protein localises to the nucleus. Its subcellular location is the spindle. The enzyme catalyses GTP + H2O = GDP + phosphate + H(+). Regulator of microtubule dynamics that plays a key role in myelination by promoting elongation of the myelin sheath. Acts as a microtubule nucleation factor in oligodendrocytes: specifically localizes to the postsynaptic Golgi apparatus region, also named Golgi outpost, and promotes microtubule nucleation, an important step for elongation of the myelin sheath. Required for both uniform polarized growth of distal microtubules as well as directing the branching of proximal processes. Shows magnesium-dependent GTPase activity; the role of the GTPase activity is unclear. In addition to microtubule nucleation activity, also involved in microtubule bundling and stabilization of existing microtubules, thereby maintaining the integrity of the microtubule network. Regulates microtubule dynamics by promoting tubulin acetylation: acts by inhibiting the tubulin deacetylase activity of HDAC6. Also regulates cell migration: phosphorylation by ROCK1 inhibits interaction with HDAC6, resulting in decreased acetylation of tubulin and increased cell motility. Plays a role in cell proliferation by regulating the G1/S-phase transition. Involved in astral microtubule organization and mitotic spindle orientation during early stage of mitosis; this process is regulated by phosphorylation by LIMK2. This chain is Tubulin polymerization-promoting protein, found in Mus musculus (Mouse).